Here is a 336-residue protein sequence, read N- to C-terminus: HTH-type transcriptional repressor PurR (336 aa).

The HTH lacI-type domain occupies 2-56 (ATIKDVAKMAGVSTTTVSHVINKTRFVAKDTEEAVLSAIKQLNYSPSAVARSLKV). The segment at residues 4–23 (IKDVAKMAGVSTTTVSHVIN) is a DNA-binding region (H-T-H motif). Residues 48–56 (SAVARSLKV) mediate DNA binding. Hypoxanthine is bound by residues Y73, K188, T190, F219, and D273.

Homodimer.

Its pathway is purine metabolism; purine nucleotide biosynthesis [regulation]. In terms of biological role, is the main repressor of the genes involved in the de novo synthesis of purine nucleotides, regulating purB, purC, purEK, purF, purHD, purL, purMN and guaBA expression. PurR is allosterically activated to bind its cognate DNA by binding the purine corepressors, hypoxanthine or guanine, thereby effecting transcription repression. The protein is HTH-type transcriptional repressor PurR of Haemophilus influenzae (strain 86-028NP).